Reading from the N-terminus, the 225-residue chain is Ribonuclease 3 (225 aa).

Residues 5–127 (IDKLERKLGY…IIGAIYLDSD (123 aa)) form the RNase III domain. Mg(2+) is bound at residue Glu-40. Asp-44 is a catalytic residue. 2 residues coordinate Mg(2+): Asp-113 and Glu-116. Glu-116 is a catalytic residue. Residues 154–224 (DPKTRLQEFL…AETALEQLTN (71 aa)) form the DRBM domain. A disordered region spans residues 204–225 (GTSRRKAEQAAAETALEQLTNG). The segment covering 212–225 (QAAAETALEQLTNG) has biased composition (low complexity).

It belongs to the ribonuclease III family. Homodimer. It depends on Mg(2+) as a cofactor.

Its subcellular location is the cytoplasm. It catalyses the reaction Endonucleolytic cleavage to 5'-phosphomonoester.. Its function is as follows. Digests double-stranded RNA. Involved in the processing of primary rRNA transcript to yield the immediate precursors to the large and small rRNAs (23S and 16S). Processes some mRNAs, and tRNAs when they are encoded in the rRNA operon. Processes pre-crRNA and tracrRNA of type II CRISPR loci if present in the organism. The protein is Ribonuclease 3 of Vibrio parahaemolyticus serotype O3:K6 (strain RIMD 2210633).